We begin with the raw amino-acid sequence, 216 residues long: Adenylate kinase (216 aa).

An ATP-binding site is contributed by 10–15; sequence GAGKGT. Residues 30–59 form an NMP region; it reads STGDIFRKNISENTPLGIEAKSYMDNGQLV. AMP contacts are provided by residues threonine 31, arginine 36, 57–59, 85–88, and glutamine 92; these read QLV and GFPR. Positions 126 to 163 are LID; it reads GRRVCPSCGASYHIKFNPPTNDGKCDLCGSDVIQRKDD. Residue arginine 127 participates in ATP binding. Zn(2+)-binding residues include cysteine 130 and cysteine 133. Residue 136 to 137 participates in ATP binding; it reads SY. Positions 150 and 153 each coordinate Zn(2+). AMP is bound by residues arginine 160 and arginine 171. Glutamine 199 serves as a coordination point for ATP.

This sequence belongs to the adenylate kinase family. Monomer.

The protein localises to the cytoplasm. The enzyme catalyses AMP + ATP = 2 ADP. It participates in purine metabolism; AMP biosynthesis via salvage pathway; AMP from ADP: step 1/1. In terms of biological role, catalyzes the reversible transfer of the terminal phosphate group between ATP and AMP. Plays an important role in cellular energy homeostasis and in adenine nucleotide metabolism. This Clostridium perfringens (strain ATCC 13124 / DSM 756 / JCM 1290 / NCIMB 6125 / NCTC 8237 / Type A) protein is Adenylate kinase.